The primary structure comprises 82 residues: Penaeidin-3f (82 aa).

An N-terminal signal peptide occupies residues 1 to 19 (MRLVACLVFLASFALVCQG). Gln20 carries the post-translational modification Pyrrolidone carboxylic acid. Cystine bridges form between Cys51-Cys66, Cys55-Cys73, and Cys67-Cys74. A Serine amide modification is found at Ser81.

It belongs to the penaeidin family.

The protein resides in the cytoplasmic granule. Its function is as follows. Antibacterial and antifungal activity. Presents chitin-binding activity. The chain is Penaeidin-3f from Penaeus vannamei (Whiteleg shrimp).